Consider the following 319-residue polypeptide: ATP-dependent 6-phosphofructokinase (319 aa).

Gly11 is an ATP binding site. Position 21–25 (21–25 (RAVVR)) interacts with ADP. ATP contacts are provided by residues 72 to 73 (RC) and 102 to 105 (GDGS). Asp103 is a binding site for Mg(2+). 125 to 127 (TID) is a binding site for substrate. Asp127 acts as the Proton acceptor in catalysis. Arg154 is a binding site for ADP. Substrate contacts are provided by residues Arg162 and 169–171 (MGR). ADP is bound by residues 185–187 (GAE), Lys211, and 213–215 (KMH). Substrate-binding positions include Glu222, Arg243, and 249-252 (HIQR).

It belongs to the phosphofructokinase type A (PFKA) family. ATP-dependent PFK group I subfamily. Prokaryotic clade 'B1' sub-subfamily. As to quaternary structure, homotetramer. Mg(2+) is required as a cofactor.

Its subcellular location is the cytoplasm. It carries out the reaction beta-D-fructose 6-phosphate + ATP = beta-D-fructose 1,6-bisphosphate + ADP + H(+). It functions in the pathway carbohydrate degradation; glycolysis; D-glyceraldehyde 3-phosphate and glycerone phosphate from D-glucose: step 3/4. With respect to regulation, allosterically activated by ADP and other diphosphonucleosides, and allosterically inhibited by phosphoenolpyruvate. Functionally, catalyzes the phosphorylation of D-fructose 6-phosphate to fructose 1,6-bisphosphate by ATP, the first committing step of glycolysis. In Clostridium botulinum (strain ATCC 19397 / Type A), this protein is ATP-dependent 6-phosphofructokinase.